Here is a 223-residue protein sequence, read N- to C-terminus: Glycoprotein 42 (223 aa).

Over 1–8 the chain is Intravirion; it reads MVSFKQVR. Residues 9–29 traverse the membrane as a helical segment; sequence VPLFTAIALVIVLLLAYFLPP. Over 30–223 the chain is Virion surface; sequence RVRGGGRVAA…CLCVSQRSNS (194 aa). Cystine bridges form between Cys-99/Cys-138, Cys-102/Cys-115, Cys-128/Cys-214, Cys-132/Cys-216, and Cys-192/Cys-208. One can recognise a C-type lectin domain in the interval 111 to 217; that stretch reads YKGCCFYFTK…CSFLKPCLCV (107 aa).

It belongs to the epstein barr virus gp42 family. As to quaternary structure, forms a complex with gp25 and gp85 via its N-terminus; this complex is used for invasion of B-lymphocytes. Interacts with human HLA-DRA and HLA-DRB1.

Its subcellular location is the virion membrane. It localises to the host membrane. In terms of biological role, plays a role in virion attachment to host B-lymphocytes, through binding to leukocyte antigen (HLA) class II and subsequently participates in fusion of the virion with host membranes. May act as a tropism switch that directs fusion with B-lymphocytes and inhibits fusion with epithelial cells. Additionally, hampers T-cell recognition via HLA class II molecules through steric hindrance of T-cell receptor-class II-peptide interaction. Soluble gp42 inhibits HLA class II-restricted antigen presentation to T-cells through binding to immature and mature HLA class II complexes. This Epstein-Barr virus (strain B95-8) (HHV-4) protein is Glycoprotein 42.